Reading from the N-terminus, the 301-residue chain is GTP cyclohydrolase FolE2 (301 aa).

This sequence belongs to the GTP cyclohydrolase IV family.

The enzyme catalyses GTP + H2O = 7,8-dihydroneopterin 3'-triphosphate + formate + H(+). It functions in the pathway cofactor biosynthesis; 7,8-dihydroneopterin triphosphate biosynthesis; 7,8-dihydroneopterin triphosphate from GTP: step 1/1. Converts GTP to 7,8-dihydroneopterin triphosphate. In Pseudomonas syringae pv. tomato (strain ATCC BAA-871 / DC3000), this protein is GTP cyclohydrolase FolE2.